Consider the following 341-residue polypeptide: Glyceraldehyde-3-phosphate dehydrogenase (341 aa).

Residues 11–12 (TI) and glycine 109 each bind NAD(+). A D-glyceraldehyde 3-phosphate-binding site is contributed by 138-140 (SCN). The active-site Nucleophile is cysteine 139. An NAD(+)-binding site is contributed by arginine 167. D-glyceraldehyde 3-phosphate-binding positions include threonine 169 and 192–193 (HA). Residue glutamine 299 participates in NAD(+) binding.

It belongs to the glyceraldehyde-3-phosphate dehydrogenase family. In terms of assembly, homotetramer.

The protein resides in the cytoplasm. The enzyme catalyses D-glyceraldehyde 3-phosphate + phosphate + NADP(+) = (2R)-3-phospho-glyceroyl phosphate + NADPH + H(+). It carries out the reaction D-glyceraldehyde 3-phosphate + phosphate + NAD(+) = (2R)-3-phospho-glyceroyl phosphate + NADH + H(+). It functions in the pathway carbohydrate degradation; glycolysis; pyruvate from D-glyceraldehyde 3-phosphate: step 1/5. This is Glyceraldehyde-3-phosphate dehydrogenase from Picrophilus torridus (strain ATCC 700027 / DSM 9790 / JCM 10055 / NBRC 100828 / KAW 2/3).